A 296-amino-acid chain; its full sequence is Sulfotransferase 1C2 (296 aa).

3'-phosphoadenylyl sulfate is bound at residue Lys-49–Trp-54. Arg-107 to His-109 provides a ligand contact to substrate. Catalysis depends on His-109, which acts as the Proton acceptor. Residues Arg-131, Ser-139, Tyr-194, and Thr-228 to Met-233 each bind 3'-phosphoadenylyl sulfate. Ser-139 is modified (phosphoserine). At Ser-254 the chain carries Phosphoserine. Phe-256–Gly-260 contacts 3'-phosphoadenylyl sulfate.

Belongs to the sulfotransferase 1 family. In terms of tissue distribution, found in gastrointestinal tract tissues, liver and kidney.

It localises to the cytoplasm. The protein localises to the lysosome. It is found in the mitochondrion. The catalysed reaction is a phenol + 3'-phosphoadenylyl sulfate = an aryl sulfate + adenosine 3',5'-bisphosphate + H(+). It carries out the reaction cholesterol + 3'-phosphoadenylyl sulfate = cholesterol sulfate + adenosine 3',5'-bisphosphate + H(+). Functionally, sulfotransferase that utilizes 3'-phospho-5'-adenylyl sulfate (PAPS) to catalyze the sulfate conjugation of phenolic compounds. Does not transfer sulfate to steroids, dopamine, acetaminophen, or alpha-naphthol. Except in mitochondria, where it can add sulfate to cholesterol producing cholesterol sulfate, which alters mitochondrial membrane organization, and impacts protein complex mobility increasing state-III respiration, thereby modulating mitochondrial respiration. Catalyzes the sulfation of the carcinogenic N-hydroxy-2-acetylaminofluorene leading to highly reactive intermediates capable of forming DNA adducts, potentially resulting in mutagenesis. This Oryctolagus cuniculus (Rabbit) protein is Sulfotransferase 1C2 (SULT1C2).